An 827-amino-acid chain; its full sequence is MWALRSLLRPLGLRTMSQGSARRPRPPKDPLRHLRTREKRGPGWGPGGPNTVYLQVVAAGGRDAAAALYVFSEYNRYLFNCGEGVQRLMQEHKLKVARLDNIFLTRMHWSNVGGLCGMILTLKETGLPKCVLSGPPQLEKYLEAIKIFSGPLKGIDLAVRPHSAPEYKDETMTVYQVPIHSERRCGEQEPSRSPKRSPNRLSPKQSSSDPGSAENGQCLPEGSSAGVNGKAWGRDPSLVVAFVCKLHLRKGNFLVLKAKELGLPVGTAAIAPIIAAVKDGKSITYEGREIAAEELCTPPDPGLVFIVVECPDEGFIQPICENDTFQRYQGEADAPVAVVVHIAPESVLIDSRYQQWMERFGPDTQHLILNENCPSVHNLRSHKIQTQLSLIHPDIFPQLTSFHSKEEGSTFSLPTVRGECLLKYHVRPKREWQRDTTLDCNTDEFIAEALELPNFQESVEEYRKNMQASPAPAEKRSQYPEIVFLGTGSAIPMKIRNVSSTLVNLSPDKSVLLDCGEGTFGQLCRHYGQQIDRVLCNLTAVFVSHLHADHHTGLLNILLQREHALASLGKPFQPLLVVAPTQLRAWLQQYHNQCQEILHHISMIPAKCLQKGAEVPSPPVERLISLLLETCDLQEFQTCLVRHCKHAFGCALVHSSGWKVVYSGDTMPCEALVQMGKDATLLIHEATLEDGLEEEAVEKTHSTTSQAIGVGMRMNAEFIMLNHFSQRYAKIPLFSPDFNEKVGIAFDHMKVCFGDFPTVPKLIPPLKALFADDIEEMVERREKRELRLVRAALLTQQADSSEDREPHQKRAHSEEPHSPQSKKVRAQ.

The transit peptide at 1–16 directs the protein to the mitochondrion; sequence MWALRSLLRPLGLRTM. Disordered regions lie at residues 15–46 and 181–220; these read TMSQGSARRPRPPKDPLRHLRTREKRGPGWGP and SERRCGEQEPSRSPKRSPNRLSPKQSSSDPGSAENGQCLP. Positions 181 to 192 are enriched in basic and acidic residues; it reads SERRCGEQEPSR. 6 positions are modified to phosphoserine: Ser193, Ser197, Ser202, Ser207, Ser617, and Ser735. Polar residues predominate over residues 199–210; that stretch reads NRLSPKQSSSDP. A disordered region spans residues 794 to 827; sequence LTQQADSSEDREPHQKRAHSEEPHSPQSKKVRAQ. Position 795 is a phosphothreonine (Thr795). Residue Ser800 is modified to Phosphoserine. A compositionally biased stretch (basic and acidic residues) spans 801–817; the sequence is SEDREPHQKRAHSEEPH. A Phosphoserine modification is found at Ser818.

This sequence belongs to the RNase Z family. Homodimer. Interacts with PTCD1. The cofactor is Zn(2+).

Its subcellular location is the mitochondrion. It localises to the mitochondrion matrix. The protein resides in the mitochondrion nucleoid. It is found in the nucleus. The enzyme catalyses Endonucleolytic cleavage of RNA, removing extra 3' nucleotides from tRNA precursor, generating 3' termini of tRNAs. A 3'-hydroxy group is left at the tRNA terminus and a 5'-phosphoryl group is left at the trailer molecule.. Functionally, zinc phosphodiesterase, which displays mitochondrial tRNA 3'-processing endonuclease activity. Involved in tRNA maturation, by removing a 3'-trailer from precursor tRNA. Associates with mitochondrial DNA complexes at the nucleoids to initiate RNA processing and ribosome assembly. The chain is Zinc phosphodiesterase ELAC protein 2 (Elac2) from Rattus norvegicus (Rat).